Consider the following 292-residue polypeptide: MTFQDLILSLQGYWAKQGCIIQQPYDTEKGAGTFNPATFLRVLGPEPWNVAYVEPSRRPTDGRYGENPNRLQHYYQFQVIMKPSPLNILDRYLDSLRAFGLDPCKHDIRFVEDDWESPTLGAWGLGWEVWLDGMEITQFTYFQQAGGIDLKPVSSEITYGCERIAMYLQGVDNVYDLEWVKGIKYGDIHHESEVEFSKYNFEEADVDMLLKLFGMYEKECLRLVERDLVLPAYDYVMKCSHAFNLLDARGAISVTERASYIGRVRNVARVCAEGYLRMRERLGFPLLKGGVA.

It belongs to the class-II aminoacyl-tRNA synthetase family. Tetramer of two alpha and two beta subunits.

Its subcellular location is the cytoplasm. It catalyses the reaction tRNA(Gly) + glycine + ATP = glycyl-tRNA(Gly) + AMP + diphosphate. In Pelobacter propionicus (strain DSM 2379 / NBRC 103807 / OttBd1), this protein is Glycine--tRNA ligase alpha subunit.